Consider the following 335-residue polypeptide: Oligopeptide transport ATP-binding protein OppD (335 aa).

The 250-residue stretch at 18–267 (LEVNDLRVTF…PVHPYSIGLL (250 aa)) folds into the ABC transporter domain. Residue 54–61 (GESGSGKS) participates in ATP binding.

The protein belongs to the ABC transporter superfamily. As to quaternary structure, the complex is composed of two ATP-binding proteins (OppD and OppF), two transmembrane proteins (OppB and OppC) and a solute-binding protein (OppA).

It is found in the cell inner membrane. It catalyses the reaction a [peptide](out) + ATP + H2O = a [peptide](in) + ADP + phosphate + H(+). The catalysed reaction is L-alanyl-gamma-D-glutamyl-meso-2,6-diaminopimelate(out) + ATP + H2O = L-alanyl-gamma-D-glutamyl-meso-2,6-diaminopimelate(in) + ADP + phosphate + H(+). Part of the ABC transporter complex OppABCDF involved in the uptake of oligopeptides, including the cell wall murein tripeptide L-alanyl-gamma-D-glutamyl-meso-diaminopimelate. Responsible for energy coupling to the transport system. Plays an important nutritional role and is involved in the recycling of cell wall peptides. Binds ATP. The sequence is that of Oligopeptide transport ATP-binding protein OppD from Salmonella typhimurium (strain LT2 / SGSC1412 / ATCC 700720).